The primary structure comprises 423 residues: MTLLPKKPCKSKAKGLLLGALFTSFLLLLYSYVVPPLYPNMAFTTSEAAAPCSPIPNEPVAATPANGSAGGCQPRRDIVFMKTHKTASSTLLNILFRFGQKHELKFAFPNGRNDFHYPSYFARSLVQDYRPGACFNIICNHMRFHYEEVRGLVRPGATFITVIRDPARLFESSFHYFGSVVPLTWKLSSRDKLAEFLQDPDRYYDPSSYNAHYLRNLLFFDLGYDSSLDPASPRVQEHILEVERRFHLVLLQEYFDESLVLLRELLCWDLEDVLYFKLNARRDSPVPRLSGELYRRATAWNLLDVRLYRHFNASFWRKVEAFGRERMAREVAELRQANEHMRHICIDGGQAVGAEAIQDSAMQPWQPLGIKSILGYNLKKSIGPQHEQLCRRMLTPEIQYLSDLGANLWVTKLWKFLRDFLRW.

The Cytoplasmic portion of the chain corresponds to 1–12 (MTLLPKKPCKSK). The chain crosses the membrane as a helical; Signal-anchor for type II membrane protein span at residues 13-35 (AKGLLLGALFTSFLLLLYSYVVP). Over 36-423 (PLYPNMAFTT…WKFLRDFLRW (388 aa)) the chain is Lumenal. 2 N-linked (GlcNAc...) asparagine glycosylation sites follow: asparagine 66 and asparagine 312.

This sequence belongs to the galactose-3-O-sulfotransferase family. As to expression, expressed in brain, testis, kidney, stomach, small intestine, liver, and lung. Not detected in heart, skeletal muscle, and spleen.

The protein resides in the golgi apparatus membrane. The catalysed reaction is a beta-D-galactosyl-(1&lt;-&gt;1')-N-acylsphing-4-enine + 3'-phosphoadenylyl sulfate = an N-acyl-1-beta-D-(3-O-sulfo)-galactosyl-sphing-4-enine + adenosine 3',5'-bisphosphate + H(+). The enzyme catalyses a 1-O-alkyl-2-acyl-3-O-(beta-D-galactosyl)-sn-glycerol + 3'-phosphoadenylyl sulfate = a 1-O-alkyl-2-acyl-3-(beta-D-3-sulfogalactosyl)-sn-glycerol + adenosine 3',5'-bisphosphate + H(+). It carries out the reaction a beta-D-Gal-(1&lt;-&gt;1')-ceramide + 3'-phosphoadenylyl sulfate = 1-(3-O-sulfo-beta-D-galactosyl)-ceramide + adenosine 3',5'-bisphosphate + H(+). It catalyses the reaction a 1,2-diacyl-3-O-(beta-D-galactosyl)-sn-glycerol + 3'-phosphoadenylyl sulfate = 1,2-diacyl-3-(3-O-sulfo-beta-D-galactosyl)-sn-glycerol + adenosine 3',5'-bisphosphate + H(+). The catalysed reaction is a beta-D-Gal-(1-&gt;4)-beta-D-Glc-(1&lt;-&gt;1)-Cer(d18:1(4E)) + 3'-phosphoadenylyl sulfate = beta-D-3-sulfogalactosyl-(1-&gt;4)-beta-D-glucosyl-(1&lt;-&gt;1')-N-acylsphing-4-enine + adenosine 3',5'-bisphosphate + H(+). It participates in lipid metabolism; sphingolipid metabolism. In terms of biological role, catalyzes the transfer of a sulfate group to position 3 of non-reducing beta-galactosyl residues in glycerolipids and sphingolipids, therefore participates in the biosynthesis of sulfoglycolipids. Catalyzes the synthesis of galactosylceramide sulfate (sulfatide), a major lipid component of the myelin sheath and of monogalactosylalkylacylglycerol sulfate (seminolipid), present in spermatocytes. Seems to prefer beta-glycosides at the non-reducing termini of sugar chains attached to a lipid moiety. Also acts on lactosylceramide, galactosyl 1-alkyl-2-sn-glycerol and galactosyl diacylglycerol (in vitro). The protein is Galactosylceramide sulfotransferase of Mus musculus (Mouse).